Here is a 133-residue protein sequence, read N- to C-terminus: Nickel-responsive regulator (133 aa).

4 residues coordinate Ni(2+): His76, His87, His89, and Cys95.

Belongs to the transcriptional regulatory CopG/NikR family. Homotetramer. Ni(2+) serves as cofactor.

Transcriptional repressor of the nikABCDE operon. Is active in the presence of excessive concentrations of intracellular nickel. The polypeptide is Nickel-responsive regulator (Escherichia coli O6:K15:H31 (strain 536 / UPEC)).